The following is a 331-amino-acid chain: Putative type II secretion system C-type protein YghF (331 aa).

A helical membrane pass occupies residues 44-60 (MFWLMLLIISAKMAHSL).

It belongs to the GSP C family.

Its subcellular location is the cell inner membrane. Its function is as follows. Involved in a type II secretion system (T2SS, formerly general secretion pathway, GSP) for the export of folded proteins across the outer membrane. The polypeptide is Putative type II secretion system C-type protein YghF (Escherichia coli (strain K12)).